A 147-amino-acid chain; its full sequence is MKTFVPKNNEQNWVVVDAAGVPLGRLATLVASRIRGKHRPDFTPNIIQGDFVVVVNAEKVVLTGNKLDGKVYTRYTGYQGGLKTETARQALAKHPERVIEHAVFGMLPKGRQGRALHSRLKVYAGTTHPHAAQKPQQLEVRTALEVK.

Belongs to the universal ribosomal protein uL13 family. In terms of assembly, part of the 50S ribosomal subunit.

Its function is as follows. This protein is one of the early assembly proteins of the 50S ribosomal subunit, although it is not seen to bind rRNA by itself. It is important during the early stages of 50S assembly. The polypeptide is Large ribosomal subunit protein uL13 (Deinococcus geothermalis (strain DSM 11300 / CIP 105573 / AG-3a)).